A 426-amino-acid chain; its full sequence is Histidine--tRNA ligase (426 aa).

Belongs to the class-II aminoacyl-tRNA synthetase family. Homodimer.

The protein localises to the cytoplasm. The enzyme catalyses tRNA(His) + L-histidine + ATP = L-histidyl-tRNA(His) + AMP + diphosphate + H(+). This Shewanella baltica (strain OS223) protein is Histidine--tRNA ligase.